The sequence spans 407 residues: S-adenosylmethionine synthase (407 aa).

ATP is bound at residue H15. Residue D17 participates in Mg(2+) binding. E43 contributes to the K(+) binding site. L-methionine contacts are provided by E56 and Q99. A flexible loop region spans residues 99 to 109; that stretch reads QSPDIARGVDT. The tract at residues 112-131 is disordered; the sequence is ERRGGGTAPGGPGDELDRQG. Residues 179 to 181, 252 to 253, D261, 267 to 268, A284, and K288 contribute to the ATP site; these read DGK, RF, and RK. L-methionine is bound at residue D261. K292 provides a ligand contact to L-methionine.

This sequence belongs to the AdoMet synthase family. In terms of assembly, homotetramer; dimer of dimers. Mg(2+) serves as cofactor. The cofactor is K(+).

It is found in the cytoplasm. It carries out the reaction L-methionine + ATP + H2O = S-adenosyl-L-methionine + phosphate + diphosphate. Its pathway is amino-acid biosynthesis; S-adenosyl-L-methionine biosynthesis; S-adenosyl-L-methionine from L-methionine: step 1/1. Functionally, catalyzes the formation of S-adenosylmethionine (AdoMet) from methionine and ATP. The overall synthetic reaction is composed of two sequential steps, AdoMet formation and the subsequent tripolyphosphate hydrolysis which occurs prior to release of AdoMet from the enzyme. The chain is S-adenosylmethionine synthase from Streptomyces fradiae (Streptomyces roseoflavus).